Here is a 137-residue protein sequence, read N- to C-terminus: Small ribosomal subunit protein bS16 (137 aa).

A compositionally biased stretch (basic and acidic residues) spans 104–118 (ADEKKKPVLKPKTEK). The disordered stretch occupies residues 104–137 (ADEKKKPVLKPKTEKAAPAPEAAAPEAESTEEQA). The segment covering 119 to 130 (AAPAPEAAAPEA) has biased composition (low complexity).

Belongs to the bacterial ribosomal protein bS16 family.

This chain is Small ribosomal subunit protein bS16, found in Clavibacter michiganensis subsp. michiganensis (strain NCPPB 382).